A 103-amino-acid chain; its full sequence is Large ribosomal subunit protein uL24 (103 aa).

This sequence belongs to the universal ribosomal protein uL24 family. In terms of assembly, part of the 50S ribosomal subunit.

One of two assembly initiator proteins, it binds directly to the 5'-end of the 23S rRNA, where it nucleates assembly of the 50S subunit. Functionally, one of the proteins that surrounds the polypeptide exit tunnel on the outside of the subunit. The protein is Large ribosomal subunit protein uL24 of Mannheimia succiniciproducens (strain KCTC 0769BP / MBEL55E).